The primary structure comprises 143 residues: MFMGEFQHQLDAKGRMIVPAKFREELTEHFVITRGLDKCLFGYTLTEWAAIEEKLKALPLTRRDARKFMRMFFSGAVEVEMDKQGRINIPKHLMEYAGLSKEATVIGVSSRIEIWDRKLWSDFYEETEEEFETIAEELIDFDF.

SpoVT-AbrB domains lie at Glu5–Glu47 and Ala76–Leu119.

The protein belongs to the MraZ family. As to quaternary structure, forms oligomers.

It localises to the cytoplasm. The protein resides in the nucleoid. The polypeptide is Transcriptional regulator MraZ (Macrococcus caseolyticus (strain JCSC5402) (Macrococcoides caseolyticum)).